The following is a 650-amino-acid chain: Chaperone protein DnaK (650 aa).

Thr-200 is subject to Phosphothreonine; by autocatalysis. The span at 612 to 632 shows a compositional bias: low complexity; sequence GEGATAGAAAGAGAAGGQQAQ. A disordered region spans residues 612 to 650; it reads GEGATAGAAAGAGAAGGQQAQPQDDNVVDAEFKEVNDKK. Residues 641-650 are compositionally biased toward basic and acidic residues; sequence AEFKEVNDKK.

The protein belongs to the heat shock protein 70 family.

In terms of biological role, acts as a chaperone. This chain is Chaperone protein DnaK, found in Cupriavidus necator (strain ATCC 17699 / DSM 428 / KCTC 22496 / NCIMB 10442 / H16 / Stanier 337) (Ralstonia eutropha).